Here is a 417-residue protein sequence, read N- to C-terminus: Tol-Pal system protein TolB (417 aa).

The signal sequence occupies residues 1-16; sequence MRYLWLFLIHTIGLFA.

This sequence belongs to the TolB family. In terms of assembly, the Tol-Pal system is composed of five core proteins: the inner membrane proteins TolA, TolQ and TolR, the periplasmic protein TolB and the outer membrane protein Pal. They form a network linking the inner and outer membranes and the peptidoglycan layer.

It localises to the periplasm. Functionally, part of the Tol-Pal system, which plays a role in outer membrane invagination during cell division and is important for maintaining outer membrane integrity. The chain is Tol-Pal system protein TolB from Helicobacter pylori (strain ATCC 700392 / 26695) (Campylobacter pylori).